A 755-amino-acid polypeptide reads, in one-letter code: Lysosome membrane protein 2-B (755 aa).

Residues M1–R6 are Cytoplasmic-facing. Residues I7–V27 form a helical membrane-spanning segment. Residues N28, N76, N379, N465, N497, N588, N607, and N680 are each glycosylated (N-linked (GlcNAc...) asparagine). The Lumenal portion of the chain corresponds to N28 to A727. The chain crosses the membrane as a helical span at residues I728–V748. The Cytoplasmic portion of the chain corresponds to L749–L755. Residues I752 to I753 carry the Di-leucine motif motif.

It belongs to the CD36 family. Post-translationally, heavily glycosylated.

The protein resides in the lysosome membrane. Its function is as follows. May act as a lysosomal receptor. May be involved in macropinocytosis and fluid phase exocytosis. In Dictyostelium discoideum (Social amoeba), this protein is Lysosome membrane protein 2-B (lmpB).